Here is a 367-residue protein sequence, read N- to C-terminus: MAIKTENFILNIGPQHPSTHGVFRLRIVLDGEVITDLEPVFGYLHRGIEKLAEGRTYLQDIPFTDRLDYLGSMTNNHAYVMAVEKLAGITVPERAEYIRVILDELQRIASHLAGLGFFLNDLGALQTPLLYMFREREKIVELFDMCSGQRLNYNYYRFGGFVQDLPEEFLPALKILLDTLPGFIDEYEQLISTNEIVLIRTKGVGVLKRDLAINSSAAGPVLRASGINWDIRRNDPYSIYNRFEFDIPIAKNGDTYDRYMIRILEMRQSVRILRQAVKDLPEGEIMGKAPKLLKPPAGEVYSRIEGPKGELGFYLVSDGTDKPYRWRVRPPCLLNLSALKDMVVGWKVADLMAIFGSIDIVMGEVDR.

Belongs to the complex I 49 kDa subunit family. NDH-1 is composed of 14 different subunits. Subunits NuoB, C, D, E, F, and G constitute the peripheral sector of the complex.

It localises to the cell membrane. It catalyses the reaction a quinone + NADH + 5 H(+)(in) = a quinol + NAD(+) + 4 H(+)(out). In terms of biological role, NDH-1 shuttles electrons from NADH, via FMN and iron-sulfur (Fe-S) centers, to quinones in the respiratory chain. The immediate electron acceptor for the enzyme in this species is believed to be ubiquinone. Couples the redox reaction to proton translocation (for every two electrons transferred, four hydrogen ions are translocated across the cytoplasmic membrane), and thus conserves the redox energy in a proton gradient. In Dehalococcoides mccartyi (strain ATCC BAA-2100 / JCM 16839 / KCTC 5957 / BAV1), this protein is NADH-quinone oxidoreductase subunit D.